The following is a 184-amino-acid chain: (2E)-enoyl-[ACP] glycyltransferase (184 aa).

The protein belongs to the FcoT family.

The enzyme catalyses a (3R)-3-[(carboxymethyl)amino]fatty acid + holo-[ACP] + H(+) = a (2E)-enoyl-[ACP] + glycine + H2O. It catalyses the reaction (3R)-3-[(carboxylmethyl)amino]decanoate + holo-[ACP] + H(+) = (2E)-decenoyl-[ACP] + glycine + H2O. Its function is as follows. Involved in the biosynthesis of a unique class of isonitrile lipopeptides (INLPs) that seem to play a role in metal acquisition in M.marinum. Catalyzes a Michael addition of glycine to the beta-position of an alpha,beta-unsaturated fatty acyl-[ACP], producing a (3R)-3-[(carboxymethyl)amino]fatty acid. Acts on the (2E)-decenoyl moiety loaded on the acyl-carrier protein MmaB, forming the product (3R)-3-[(carboxymethyl)amino]decanoate released from MmaB. The chain is (2E)-enoyl-[ACP] glycyltransferase from Mycobacterium marinum (strain ATCC BAA-535 / M).